We begin with the raw amino-acid sequence, 152 residues long: Transcriptional regulator MraZ (152 aa).

2 SpoVT-AbrB domains span residues 7-51 and 89-132; these read KERH…APDR and LEMV…DPQR.

This sequence belongs to the MraZ family. In terms of assembly, forms oligomers.

It is found in the cytoplasm. Its subcellular location is the nucleoid. The sequence is that of Transcriptional regulator MraZ from Pelodictyon phaeoclathratiforme (strain DSM 5477 / BU-1).